Reading from the N-terminus, the 133-residue chain is MSAEKISISLPKELYRELEDFITRKGIPDRSKIFQIALRNYLDENREGTEIIYGIINLVYDHEEASEALTEIQHEYKDNIISTLHLHVNERLCIEAIAVKGEKSKLVELNNRLGQIRGILKARLLISFPYEKT.

Residues His-74, His-85, His-87, and Cys-93 each coordinate Ni(2+).

It belongs to the transcriptional regulatory CopG/NikR family. Ni(2+) is required as a cofactor.

Functionally, transcriptional regulator. The chain is Putative nickel-responsive regulator from Saccharolobus islandicus (strain Y.N.15.51 / Yellowstone #2) (Sulfolobus islandicus).